We begin with the raw amino-acid sequence, 195 residues long: dTDP-4-dehydrorhamnose 3,5-epimerase (195 aa).

Substrate-binding positions include R31, E36, Q54–N56, and R67. H70 serves as the catalytic Proton acceptor. Positions 80 and 127 each coordinate substrate. Residue Y140 is the Proton donor of the active site. Substrate contacts are provided by D151 and K176.

It belongs to the dTDP-4-dehydrorhamnose 3,5-epimerase family. In terms of assembly, homodimer.

It carries out the reaction dTDP-4-dehydro-6-deoxy-alpha-D-glucose = dTDP-4-dehydro-beta-L-rhamnose. The protein operates within carbohydrate biosynthesis; dTDP-L-rhamnose biosynthesis. In terms of biological role, catalyzes the epimerization of the C3' and C5'positions of dTDP-6-deoxy-D-xylo-4-hexulose, forming dTDP-6-deoxy-L-lyxo-4-hexulose. The sequence is that of dTDP-4-dehydrorhamnose 3,5-epimerase from Sinorhizobium fredii (strain NBRC 101917 / NGR234).